Here is a 654-residue protein sequence, read N- to C-terminus: Pyoverdine export ATP-binding/permease protein PvdT (654 aa).

One can recognise an ABC transporter domain in the interval 6–245 (IELCDIRKAY…QPEQLQANDL (240 aa)). 43-50 (GASGSGKS) serves as a coordination point for ATP. 4 helical membrane-spanning segments follow: residues 282–302 (ALTLLGIIIGVASVVVMLAVG), 529–549 (LSLMLGAIAAISLLVGGIGVM), 596–616 (IVIALLVGGGLLLADIAVAFA), and 617–637 (LPAILGAFACAVITGVVFGFM).

It belongs to the ABC transporter superfamily. Macrolide exporter (TC 3.A.1.122) family. As to quaternary structure, part of the tripartite efflux system PvdRT-OpmQ, which is composed of an inner membrane component with both ATPase and permease domains, PvdT, a periplasmic membrane fusion protein, PvdR, and an outer membrane component, OpmQ.

Its subcellular location is the cell inner membrane. Part of the tripartite efflux system PvdRT-OpmQ required for the secretion into the extracellular milieu of the siderophore pyoverdine (PVD), which is involved in iron acquisition. This subunit binds PVD and drives its secretion by hydrolyzing ATP. The system is responsible for export of newly synthesized PVD after the final steps of biosynthesis have taken place in the periplasm. It is also responsible for recycling of PVD after internalization of ferri-PVD into the periplasm by the outer-membrane receptor FpvA and release of iron from PVD, thus making PVD available for new cycles of iron uptake. The chain is Pyoverdine export ATP-binding/permease protein PvdT from Pseudomonas entomophila (strain L48).